An 872-amino-acid chain; its full sequence is N-acetyltransferase eso1 (872 aa).

The polymerase type-Y stretch occupies residues 1–591 (MELGKSKFSW…KQVKPKTYGR (591 aa)). The UmuC domain occupies 29-285 (VAHIDQDAFY…LKITDIRMLG (257 aa)). The segment at 533–567 (SADETYTCEECEQKITLSERNEHEDYHIALSISRK) adopts a UBZ3-type zinc-finger fold. Zn(2+)-binding residues include Cys-540, Cys-543, His-555, and His-559. Residues 569–602 (RYNNLVPPSHDKPKQVKPKTYGRKTGSKHYAPLS) form a disordered region. The segment covering 583-595 (QVKPKTYGRKTGS) has biased composition (basic residues). The segment at 592 to 872 (KTGSKHYAPL…KSLRYAVYES (281 aa)) is acetyltransferase. The segment at 653-677 (VTCSECSMEYNSTSEEDILLHSRFH) adopts a CCHH-type zinc-finger fold.

This sequence in the C-terminal section; belongs to the acetyltransferase family. ECO subfamily. The protein in the N-terminal section; belongs to the DNA polymerase type-Y family. Interacts with pds5.

It is found in the nucleus. Probable acetyltransferase required for the establishment of sister chromatid cohesion and couple the processes of cohesion and DNA replication to ensure that only sister chromatids become paired together. In contrast to the structural cohesins, the deposition and establishment factors are required only during S phase. The relevance of acetyltransferase function remains unclear. In Schizosaccharomyces pombe (strain 972 / ATCC 24843) (Fission yeast), this protein is N-acetyltransferase eso1 (eso1).